We begin with the raw amino-acid sequence, 130 residues long: Small ribosomal subunit protein uS8z/uS8w (130 aa).

This sequence belongs to the universal ribosomal protein uS8 family.

Its subcellular location is the cytoplasm. The sequence is that of Small ribosomal subunit protein uS8z/uS8w (RPS15AA) from Arabidopsis thaliana (Mouse-ear cress).